We begin with the raw amino-acid sequence, 62 residues long: Small ribosomal subunit protein uS14 (62 aa).

4 residues coordinate Zn(2+): C25, C28, C41, and C44.

The protein belongs to the universal ribosomal protein uS14 family. Zinc-binding uS14 subfamily. As to quaternary structure, part of the 30S ribosomal subunit. Contacts proteins S3 and S10. It depends on Zn(2+) as a cofactor.

In terms of biological role, binds 16S rRNA, required for the assembly of 30S particles and may also be responsible for determining the conformation of the 16S rRNA at the A site. This Sulfurihydrogenibium sp. (strain YO3AOP1) protein is Small ribosomal subunit protein uS14.